The sequence spans 263 residues: uncharacterized protein (263 aa).

31–38 provides a ligand contact to ATP; the sequence is GPTGSGKT.

It belongs to the CbbQ/NirQ/NorQ/GpvN family.

This is an uncharacterized protein from Staphylococcus aureus (strain bovine RF122 / ET3-1).